The sequence spans 61 residues: Large ribosomal subunit protein uL29 (61 aa).

It belongs to the universal ribosomal protein uL29 family.

This Xanthomonas euvesicatoria pv. vesicatoria (strain 85-10) (Xanthomonas campestris pv. vesicatoria) protein is Large ribosomal subunit protein uL29.